Consider the following 177-residue polypeptide: Peptide methionine sulfoxide reductase MsrA 2 (177 aa).

Residue Cys12 is part of the active site.

Belongs to the MsrA Met sulfoxide reductase family.

The catalysed reaction is L-methionyl-[protein] + [thioredoxin]-disulfide + H2O = L-methionyl-(S)-S-oxide-[protein] + [thioredoxin]-dithiol. It carries out the reaction [thioredoxin]-disulfide + L-methionine + H2O = L-methionine (S)-S-oxide + [thioredoxin]-dithiol. Has an important function as a repair enzyme for proteins that have been inactivated by oxidation. Catalyzes the reversible oxidation-reduction of methionine sulfoxide in proteins to methionine. This chain is Peptide methionine sulfoxide reductase MsrA 2 (msrA2), found in Staphylococcus aureus (strain NCTC 8325 / PS 47).